A 395-amino-acid chain; its full sequence is S-adenosylmethionine synthase (395 aa).

Histidine 16 contributes to the ATP binding site. Aspartate 18 is a binding site for Mg(2+). Glutamate 44 lines the K(+) pocket. L-methionine-binding residues include glutamate 57 and glutamine 100. Residues 100-110 (QSPDIAQGVDD) are flexible loop. Residues 174–176 (DAK), 241–242 (RF), aspartate 250, 256–257 (RK), alanine 273, and lysine 277 contribute to the ATP site. Aspartate 250 provides a ligand contact to L-methionine. Lysine 281 is an L-methionine binding site.

The protein belongs to the AdoMet synthase family. As to quaternary structure, homotetramer; dimer of dimers. It depends on Mg(2+) as a cofactor. K(+) is required as a cofactor.

Its subcellular location is the cytoplasm. The enzyme catalyses L-methionine + ATP + H2O = S-adenosyl-L-methionine + phosphate + diphosphate. Its pathway is amino-acid biosynthesis; S-adenosyl-L-methionine biosynthesis; S-adenosyl-L-methionine from L-methionine: step 1/1. Its function is as follows. Catalyzes the formation of S-adenosylmethionine (AdoMet) from methionine and ATP. The overall synthetic reaction is composed of two sequential steps, AdoMet formation and the subsequent tripolyphosphate hydrolysis which occurs prior to release of AdoMet from the enzyme. This chain is S-adenosylmethionine synthase, found in Lactiplantibacillus plantarum (strain ATCC BAA-793 / NCIMB 8826 / WCFS1) (Lactobacillus plantarum).